We begin with the raw amino-acid sequence, 451 residues long: MSIQSGEILETVKMVADQNFDVRTITIGIDLHDCISTDIDVLNQNIYNKITTVGKDLVATAKYLSAKYGVPIVNQRISVTPIAQIAAATHADSYVSVAQTLDKAAKAIGVSFIGGFSALVQKGMSPSDEVLIRSIPEAMKTTDIVCSSINIGSTRAGINMDAVRLAGETIKRTAEITLEGFGCAKIVVFCNAVEDNPFMAGAFHGSGEADAVINVGVSGPGVVKAALENSDATTLTEVAEVVKKTAFKITRVGELIGREASKMLNIPFGILDLSLAPTPAVGDSVARILEEMGLSVCGTHGTTAALALLNDAVKKGGMMASSAVGGLSGAFIPVSEDEGMIAAAEAGVLTLDKLEAMTAVCSVGLDMIAVPGDTPAHTISGIIADEAAIGMINSKTTAVRIIPVTGKTVGDSVEFGGLLGYAPVMPVKEGSCEVFVNRGGRIPAPVQSMKN.

It belongs to the UPF0210 family. As to quaternary structure, homodimer.

The protein is UPF0210 protein NMA1908 of Neisseria meningitidis serogroup A / serotype 4A (strain DSM 15465 / Z2491).